Consider the following 646-residue polypeptide: Capsid scaffolding protein (646 aa).

Residues H55, S123, and H142 each act as charge relay system in the active site. Residues 336–355 form an interaction with pAP region; sequence GDYILVPAAQYNQLVVGQHT. Residues 421-483 are disordered; the sequence is TKGSDPHVIQ…RPGERRAGRP (63 aa). Residues 445 to 451 carry the Nuclear localization signal motif; the sequence is RYARKRR. Basic and acidic residues-rich tracts occupy residues 452 to 462 and 471 to 480; these read HDWDATTRDDL and RSPRPGERRA. The interval 626–646 is interaction with major capsid protein; it reads TGLEFGRDDADIFVSQMMSAR.

The protein belongs to the herpesviridae capsid scaffolding protein family. As to quaternary structure, homomultimer. Interacts with major capsid protein. In terms of assembly, exists in a monomer-dimer equilibrium with the dimer being the active species. Post-translationally, capsid scaffolding protein is cleaved by assemblin after formation of the spherical procapsid. As a result, the capsid obtains its mature, icosahedral shape. Cleavages occur at two or more sites: release (R-site) and maturation (M-site).

Its subcellular location is the host cytoplasm. It is found in the host nucleus. It carries out the reaction Cleaves -Ala-|-Ser- and -Ala-|-Ala- bonds in the scaffold protein.. In terms of biological role, acts as a scaffold protein by binding major capsid protein in the cytoplasm, inducing the nuclear localization of both proteins. Multimerizes in the nucleus such as major capsid protein forms the icosahedral T=16 capsid. Autocatalytic cleavage releases the assembly protein, and subsequently abolishes interaction with major capsid protein. Cleavages products are evicted from the capsid before or during DNA packaging. Its function is as follows. Protease that plays an essential role in virion assembly within the nucleus. Catalyzes the cleavage of the assembly protein after formation of the spherical procapsid. By that cleavage, the capsid matures and gains its icosahedral shape. The cleavage sites seem to include -Ala-Ser-, -Ala-Ala-, as well as Ala-Thr bonds. Assemblin and cleavages products are evicted from the capsid before or during DNA packaging. Functionally, plays a major role in capsid assembly. Acts as a scaffold protein by binding major capsid protein. Multimerizes in the nucleus such as major capsid protein forms the icosahedral T=16 capsid. Cleaved by assemblin after capsid completion. The cleavages products are evicted from the capsid before or during DNA packaging. This is Capsid scaffolding protein (35) from Equus caballus (Horse).